The primary structure comprises 153 residues: Calmodulin-like protein 4 (153 aa).

4 EF-hand domains span residues 8 to 43, 44 to 79, 81 to 116, and 117 to 152; these read DQIN…LGAS, PTPG…QIKQ, DPKK…LGEK, and LTHK…PVRD.

It belongs to the calmodulin family. Interacts with MYO7B; the interaction mediates the association of CALML4 with the IMAC/intermicrovillar adhesion complex. Interacts with MYO7A. As to expression, expressed in the small intestine, in both mature enterocytes on the villus surface and immature cells that reside in the crypt stem-cell niche.

The protein resides in the cell projection. It is found in the microvillus. Its function is as follows. As part of the intermicrovillar adhesion complex/IMAC plays a role in epithelial brush border differentiation, controlling microvilli organization and length. Acts as a light chain for MYO7B and is required for efficient targeting of the IMAC to the tips of border brush microvilli. The polypeptide is Calmodulin-like protein 4 (Calml4) (Mus musculus (Mouse)).